The following is a 1057-amino-acid chain: Probable sucrose-phosphate synthase 1 (1057 aa).

Residues 103–115 (RRLERERGRREAT) show a composition bias toward basic and acidic residues. Disordered stretches follow at residues 103-143 (RRLE…STRS), 439-459 (PQDG…ASPD), and 670-693 (RHPQ…GDSL). Acidic residues predominate over residues 442–452 (GDMDGETEGNE).

It belongs to the glycosyltransferase 1 family. In terms of assembly, homodimer or homotetramer.

It carries out the reaction beta-D-fructose 6-phosphate + UDP-alpha-D-glucose = sucrose 6(F)-phosphate + UDP + H(+). Its pathway is glycan biosynthesis; sucrose biosynthesis; sucrose from D-fructose 6-phosphate and UDP-alpha-D-glucose: step 1/2. With respect to regulation, activity is regulated by phosphorylation and moderated by concentration of metabolites and light. Its function is as follows. Plays a role in photosynthetic sucrose synthesis by catalyzing the rate-limiting step of sucrose biosynthesis from UDP-glucose and fructose- 6-phosphate. Involved in the regulation of carbon partitioning in the leaves of plants. May regulate the synthesis of sucrose and therefore play a major role as a limiting factor in the export of photoassimilates out of the leaf. Plays a role for sucrose availability that is essential for plant growth and fiber elongation. The sequence is that of Probable sucrose-phosphate synthase 1 (SPS1) from Citrus unshiu (Satsuma mandarin).